The following is a 207-amino-acid chain: uncharacterized protein (207 aa).

Active-site charge relay system residues include Ser119 and His160.

The protein belongs to the peptidase S51 family.

This is an uncharacterized protein from Pasteurella multocida (strain Pm70).